Here is a 432-residue protein sequence, read N- to C-terminus: Histidine--tRNA ligase (432 aa).

The tract at residues 412-432 (TQVPLAAFPPEEGRPTYDDYA) is disordered. Residues 422-432 (EEGRPTYDDYA) are compositionally biased toward basic and acidic residues.

The protein belongs to the class-II aminoacyl-tRNA synthetase family.

It localises to the cytoplasm. The enzyme catalyses tRNA(His) + L-histidine + ATP = L-histidyl-tRNA(His) + AMP + diphosphate + H(+). In Natronomonas pharaonis (strain ATCC 35678 / DSM 2160 / CIP 103997 / JCM 8858 / NBRC 14720 / NCIMB 2260 / Gabara) (Halobacterium pharaonis), this protein is Histidine--tRNA ligase.